Consider the following 345-residue polypeptide: MLYSPKKLFLFFLSCIVLYVNSNNSGFVTAANSIGLNYGLLGDNLPSPSNVINLYKSIGISRIRIFDPNTEVLNALRGHRDIEVTVGVKDQDLAALAASEEAVKGWFAANIESYLADVNITFITVGNEVIPGPIGPQVLPVMQSLTNLVKSRNLPISISTVVAMSNLEQSYPPSAGMFTSQAREQLVPVLKLLSQTSTPILVNIYPYFAYASDPANIRLDYASFNTKSIVVQDGSLGYSNMFDAIFDAFVWAMEKEGVKNLPMVVSETGWPSAGNGNFTTPAIASTYNRNFVKHIASGKGTPKRPNKSMNGFLFATFNENQKPAGTEQNFGLYNPSDMKPIYKLF.

The first 22 residues, 1–22 (MLYSPKKLFLFFLSCIVLYVNS), serve as a signal peptide directing secretion. N-linked (GlcNAc...) asparagine glycans are attached at residues Asn23 and Asn119. Glu128 serves as the catalytic Proton donor. The active-site Nucleophile is the Glu267. N-linked (GlcNAc...) asparagine glycans are attached at residues Asn277 and Asn306.

It belongs to the glycosyl hydrolase 17 family.

It is found in the secreted. The enzyme catalyses Hydrolysis of (1-&gt;3)-beta-D-glucosidic linkages in (1-&gt;3)-beta-D-glucans.. Its function is as follows. May play a role in plant defense against pathogens. This is Probable glucan endo-1,3-beta-glucosidase BG4 from Arabidopsis thaliana (Mouse-ear cress).